A 201-amino-acid polypeptide reads, in one-letter code: LexA repressor 1 (201 aa).

A DNA-binding region (H-T-H motif) is located at residues 28-48 (LREIAAHLKISGTLGVSKHLE). Residues S120 and K157 each act as for autocatalytic cleavage activity in the active site.

It belongs to the peptidase S24 family. As to quaternary structure, homodimer.

It carries out the reaction Hydrolysis of Ala-|-Gly bond in repressor LexA.. Its function is as follows. Represses a number of genes involved in the response to DNA damage (SOS response), including recA and lexA. In the presence of single-stranded DNA, RecA interacts with LexA causing an autocatalytic cleavage which disrupts the DNA-binding part of LexA, leading to derepression of the SOS regulon and eventually DNA repair. The chain is LexA repressor 1 from Geobacter sulfurreducens (strain ATCC 51573 / DSM 12127 / PCA).